The primary structure comprises 53 residues: Weak toxin NWT (53 aa).

Disulfide bonds link cysteine 6–cysteine 11, cysteine 17–cysteine 33, and cysteine 37–cysteine 48.

This sequence belongs to the three-finger toxin family. Ancestral subfamily. Orphan group II sub-subfamily. Expressed by the venom gland.

It localises to the secreted. In terms of biological role, binds with low affinity and weakly inhibits muscle nicotinic acetylcholine receptor (nAChR). The protein is Weak toxin NWT of Naja kaouthia (Monocled cobra).